The chain runs to 31 residues: Cytochrome b6-f complex subunit 6 (31 aa).

Residues L4–G24 traverse the membrane as a helical segment.

Belongs to the PetL family. The 4 large subunits of the cytochrome b6-f complex are cytochrome b6, subunit IV (17 kDa polypeptide, PetD), cytochrome f and the Rieske protein, while the 4 small subunits are PetG, PetL, PetM and PetN. The complex functions as a dimer.

It localises to the plastid. The protein resides in the chloroplast thylakoid membrane. Component of the cytochrome b6-f complex, which mediates electron transfer between photosystem II (PSII) and photosystem I (PSI), cyclic electron flow around PSI, and state transitions. PetL is important for photoautotrophic growth as well as for electron transfer efficiency and stability of the cytochrome b6-f complex. This chain is Cytochrome b6-f complex subunit 6, found in Psilotum nudum (Whisk fern).